Reading from the N-terminus, the 338-residue chain is Dihydroorotate dehydrogenase (quinone) (338 aa).

FMN contacts are provided by residues A68–K72 and T92. A substrate-binding site is contributed by K72. Residue N117 to F121 coordinates substrate. Positions 147 and 180 each coordinate FMN. N180 lines the substrate pocket. Residue S183 is the Nucleophile of the active site. N185 serves as a coordination point for substrate. 2 residues coordinate FMN: K214 and T242. Residue N243–T244 participates in substrate binding. Residues G267, G296, and Y317–T318 each bind FMN.

Belongs to the dihydroorotate dehydrogenase family. Type 2 subfamily. In terms of assembly, monomer. Requires FMN as cofactor.

The protein localises to the cell membrane. The catalysed reaction is (S)-dihydroorotate + a quinone = orotate + a quinol. It participates in pyrimidine metabolism; UMP biosynthesis via de novo pathway; orotate from (S)-dihydroorotate (quinone route): step 1/1. In terms of biological role, catalyzes the conversion of dihydroorotate to orotate with quinone as electron acceptor. This chain is Dihydroorotate dehydrogenase (quinone), found in Salinispora arenicola (strain CNS-205).